Here is a 138-residue protein sequence, read N- to C-terminus: Thyrotropin subunit beta (138 aa).

A signal peptide spans 1 to 20 (MSAAVLLSVLFALACGQAAS). 6 cysteine pairs are disulfide-bonded: Cys-22–Cys-72, Cys-36–Cys-87, Cys-39–Cys-125, Cys-47–Cys-103, Cys-51–Cys-105, and Cys-108–Cys-115. The N-linked (GlcNAc...) asparagine glycan is linked to Asn-43. A propeptide spanning residues 133–138 (LGGFSV) is cleaved from the precursor.

This sequence belongs to the glycoprotein hormones subunit beta family. Heterodimer of a common alpha chain and a unique beta chain which confers biological specificity to thyrotropin, lutropin, follitropin and gonadotropin.

It localises to the secreted. Functionally, indispensable for the control of thyroid structure and metabolism. In Mus musculus (Mouse), this protein is Thyrotropin subunit beta (Tshb).